The sequence spans 1000 residues: Vacuolar sorting protein 39 (1000 aa).

Positions 16-282 (PARIDAVESY…RRLVKSNNAV (267 aa)) constitute a CNH domain. The interval 394–413 (DEASLSRGSSGISDDMESSS) is disordered. The stretch at 607–796 (YSMLVLESCP…YLNPKKSAKD (190 aa)) is one CHCR repeat. Residues 844–864 (GLSSSTDSGRSDVDTEEPLEE) form a disordered region.

Belongs to the VAM6/VPS39 family. In terms of assembly, homooligomer. Component of the homotypic fusion and vacuole protein sorting (HOPS) complex composed of the class C Vps core proteins VPS11, VCL1, VPS18 and VPS33, which in HOPS further associates with VPS39 and VPS41. Interacts directly with VPS11. Binds to RABG3B.

The protein resides in the cytoplasm. It is found in the vacuole membrane. Functionally, essential protein required during embryogenesis. Believed to act in part as a component of the putative HOPS endosomal tethering complex. HOPS is required for the central vacuole formation. May play a role in clustering and fusion of late endosomes and lysosomes. Plays a role in vesicle-mediated protein trafficking to lysosomal compartments including the endocytic membrane transport and autophagic pathways. Required for fusion of endosomes and autophagosomes with lysosomes. The chain is Vacuolar sorting protein 39 from Arabidopsis thaliana (Mouse-ear cress).